The following is a 94-amino-acid chain: Myosuppressin (94 aa).

A signal peptide spans 1–24; sequence MMSPTLMILISITTMAILSGESFG. A propeptide spanning residues 25–80 is cleaved from the precursor; it reads AMPAQCNSEFLEELPPRLRKICVAIARIWDAREMNDFVDDREYRENLPRYDSSVKR. Residue Gln81 is modified to Pyrrolidone carboxylic acid. At Phe90 the chain carries Phenylalanine amide.

Expressed throughout the nervous system (at protein level).

The protein localises to the secreted. Its function is as follows. Myoinhibiting neuropeptide. The polypeptide is Myosuppressin (Camponotus floridanus (Florida carpenter ant)).